Consider the following 92-residue polypeptide: Muscle LIM protein 1 (92 aa).

In terms of domain architecture, LIM zinc-binding spans 11 to 62 (CPACGKSVYAAEERVAGGYKFHKTCFKCSMCNKALDSTNCTEHEKELFCKNC). The Nuclear localization signal motif lies at 65 to 70 (RKYGPK).

In the embryo, expression is restricted to the somatic, visceral, and pharyngeal muscles. Within the somatic musculature, MLP60 is distributed throughout the muscle fibers. There is no expression in cardiac mesoderm or in fat body.

It is found in the cytoplasm. It localises to the nucleus. Its function is as follows. Positive regulator of myogenesis. In Drosophila melanogaster (Fruit fly), this protein is Muscle LIM protein 1 (Mlp60A).